A 26-amino-acid polypeptide reads, in one-letter code: Halocyntin (26 aa).

Has strong antibacterial activity against the Gram-positive bacteria M.luteus, S.aureus, B.megaterium, A.viridans and E.faecalis, and against the Gram-negative bacterium K.pneumoniae. Has less potent antibacterial activity against the Gram-negative bacteria E.coli DH5alpha, S.typhimurium, P.aeruginosa, E.aerogenes and N.gonorrhoeae. Has moderate hemolytic activity against sheep erythrocytes. This is Halocyntin from Halocynthia papillosa (Red sea-squirt).